Consider the following 261-residue polypeptide: MPCRGLHSIPAGPVEFPEIATVYVMCGEKLTVMIDAGVSNSIADFSFLDKLDYIVLTHLHIDHIGLLPELLQVYKAKVLVKSGFKKYLTSEDGLKKLNESAEKVLGDLYYVYGGLEKKLDQDKVIEVEGNEEFDLGGYRMRLIYTPGHARHHMSVLVDDFLFTGDSAGAYFNGVVIPTTPPVIDYKMYMESLKRQIELKPKVVGFAHGGLVSPKIMEEHLKQMLSKEEIQINVDIGGVAGEILRKQIEVNLRGLRESKKSI.

His-58, His-60, Asp-62, His-63, His-148, Asp-165, and His-207 together coordinate Zn(2+).

This sequence belongs to the metallo-beta-lactamase superfamily. In terms of assembly, monomer.

The chain is Metallo-beta-lactamase fold-containing protein ST1585 from Sulfurisphaera tokodaii (strain DSM 16993 / JCM 10545 / NBRC 100140 / 7) (Sulfolobus tokodaii).